The following is a 1963-amino-acid chain: Myosin-4 (1963 aa).

Residues 28-77 enclose the Myosin N-terminal SH3-like domain; the sequence is DSKKNVWIPDPEEGYLAGEITATKGDQVTIVTARGNEVTLKKELVQEMNP. A Myosin motor domain is found at 81–787; the sequence is EKTEDMSNLS…VLAHLEDIRD (707 aa). Lys-125 is subject to N6,N6,N6-trimethyllysine. 174–181 contributes to the ATP binding site; sequence GESGAGKT. Actin-binding stretches follow at residues 662-684 and 766-780; these read LNNLMTMLNKTHPHFIRCIIPNE and RIGLTKVFFKAGVLA. The segment at 848 to 1161 is alpha-helical tailpiece (S2); it reads MLKAGKEAEE…LEELGEKLDE (314 aa). Residues 848–1963 adopt a coiled-coil conformation; sequence MLKAGKEAEE…SPSRARASDF (1116 aa). Composition is skewed to basic and acidic residues over residues 970-988 and 1133-1146; these read LRKAESEKQSKDHQIRSLQ and NERQSRSKADRAKS. 2 disordered regions span residues 970–990 and 1125–1146; these read LRKAESEKQSKDHQIRSLQDE and SELEEELENERQSRSKADRAKS. A hinge region spans residues 1162 to 1173; it reads QGGATAAQVEVN. Residues 1162 to 1963 are light meromyosin (LMM); it reads QGGATAAQVE…SPSRARASDF (802 aa). Disordered stretches follow at residues 1317 to 1336 and 1912 to 1963; these read LTSQLEEARRTADEEARERQ and LEDA…ASDF. The segment covering 1322 to 1336 has biased composition (basic and acidic residues); sequence EEARRTADEEARERQ.

This sequence belongs to the TRAFAC class myosin-kinesin ATPase superfamily. Myosin family. Muscle myosin is a hexameric protein that consists of 2 heavy chain subunits (MHC), 2 alkali light chain subunits (MLC) and 2 regulatory light chain subunits (MLC-2). Forms a complex composed of chaperone unc-45, unc-54 and ubiquitin-protein ligase ufd-2; promotes poly-ubiquitination of unfolded unc-54. Within the complex interacts with unc-45 (via UCS domain) and ufd-2. Interacts with itr-1 (via c-terminal coiled coil domain). Post-translationally, unfolded unc-54 is poly-ubiquitinated by ufd-2.

Its subcellular location is the cytoplasm. The protein localises to the myofibril. Functionally, required for muscle contraction. The chain is Myosin-4 (unc-54) from Caenorhabditis elegans.